Here is a 469-residue protein sequence, read N- to C-terminus: 3-isopropylmalate dehydratase large subunit (469 aa).

Positions 347, 410, and 413 each coordinate [4Fe-4S] cluster.

This sequence belongs to the aconitase/IPM isomerase family. LeuC type 1 subfamily. In terms of assembly, heterodimer of LeuC and LeuD. The cofactor is [4Fe-4S] cluster.

It catalyses the reaction (2R,3S)-3-isopropylmalate = (2S)-2-isopropylmalate. It participates in amino-acid biosynthesis; L-leucine biosynthesis; L-leucine from 3-methyl-2-oxobutanoate: step 2/4. Catalyzes the isomerization between 2-isopropylmalate and 3-isopropylmalate, via the formation of 2-isopropylmaleate. In Burkholderia lata (strain ATCC 17760 / DSM 23089 / LMG 22485 / NCIMB 9086 / R18194 / 383), this protein is 3-isopropylmalate dehydratase large subunit.